The following is a 99-amino-acid chain: Carboxysome shell vertex protein CcmL (99 aa).

The 83-residue stretch at 1-83 (MKIARVCGTV…IDAAVVAIID (83 aa)) folds into the BMV domain.

The protein belongs to the CcmL/EutN family. CcmL subfamily. As to quaternary structure, homopentamer. May interact with CcmK2, this occurs at very high CcmK2 concentrations. Interacts with full-length CcmM.

The protein localises to the carboxysome. In terms of biological role, probably forms vertices in the carboxysome, a polyhedral inclusion where RuBisCO (ribulose bisphosphate carboxylase, rbcL-rbcS) is sequestered. Has been modeled to induce curvature upon insertion into an otherwise flat hexagonal molecular layer of CcmK subunits. This is Carboxysome shell vertex protein CcmL from Thermosynechococcus vestitus (strain NIES-2133 / IAM M-273 / BP-1).